A 613-amino-acid polypeptide reads, in one-letter code: Isocitrate dehydrogenase kinase/phosphatase (613 aa).

ATP-binding positions include 328-334 (APGIRGL) and K349. The active site involves D384.

The protein belongs to the AceK family.

Its subcellular location is the cytoplasm. The catalysed reaction is L-seryl-[isocitrate dehydrogenase] + ATP = O-phospho-L-seryl-[isocitrate dehydrogenase] + ADP + H(+). Its function is as follows. Bifunctional enzyme which can phosphorylate or dephosphorylate isocitrate dehydrogenase (IDH) on a specific serine residue. This is a regulatory mechanism which enables bacteria to bypass the Krebs cycle via the glyoxylate shunt in response to the source of carbon. When bacteria are grown on glucose, IDH is fully active and unphosphorylated, but when grown on acetate or ethanol, the activity of IDH declines drastically concomitant with its phosphorylation. The polypeptide is Isocitrate dehydrogenase kinase/phosphatase (Cupriavidus necator (strain ATCC 17699 / DSM 428 / KCTC 22496 / NCIMB 10442 / H16 / Stanier 337) (Ralstonia eutropha)).